A 199-amino-acid polypeptide reads, in one-letter code: Interferon kappa (199 aa).

Residues 1–21 form the signal peptide; sequence MTPKFLWLVALVALYIPPIQS. 2 disulfides stabilise this stretch: Cys24/Cys119 and Cys49/Cys162.

The protein belongs to the alpha/beta interferon family. As to expression, expressed at low levels in peritoneal macrophages.

It localises to the secreted. May play a role in the regulation of immune cell function. The sequence is that of Interferon kappa (Ifnk) from Mus musculus (Mouse).